Here is a 20-residue protein sequence, read N- to C-terminus: Photosystem II stability/assembly factor HCF136, chloroplastic (20 aa).

Belongs to the Ycf48 family.

The protein resides in the plastid. It localises to the chloroplast thylakoid lumen. In terms of biological role, essential for photosystem II (PSII) biogenesis; required for assembly of an early intermediate in PSII assembly that includes D2 (psbD) and cytochrome b559. The polypeptide is Photosystem II stability/assembly factor HCF136, chloroplastic (Spinacia oleracea (Spinach)).